Consider the following 350-residue polypeptide: Protein-glutamate methylesterase/protein-glutamine glutaminase 1 (350 aa).

Residues 6–123 (RVLVVDDSAL…GRSVENYAEE (118 aa)) enclose the Response regulatory domain. Asp-57 carries the post-translational modification 4-aspartylphosphate. Residues 159–350 (LGASGKIIFV…ARRVLGAVSA (192 aa)) enclose the CheB-type methylesterase domain. Residues Ser-171, His-197, and Asp-293 contribute to the active site.

It belongs to the CheB family. Phosphorylated by CheA. Phosphorylation of the N-terminal regulatory domain activates the methylesterase activity.

It localises to the cytoplasm. The catalysed reaction is [protein]-L-glutamate 5-O-methyl ester + H2O = L-glutamyl-[protein] + methanol + H(+). It catalyses the reaction L-glutaminyl-[protein] + H2O = L-glutamyl-[protein] + NH4(+). Involved in chemotaxis. Part of a chemotaxis signal transduction system that modulates chemotaxis in response to various stimuli. Catalyzes the demethylation of specific methylglutamate residues introduced into the chemoreceptors (methyl-accepting chemotaxis proteins or MCP) by CheR. Also mediates the irreversible deamidation of specific glutamine residues to glutamic acid. In Dechloromonas aromatica (strain RCB), this protein is Protein-glutamate methylesterase/protein-glutamine glutaminase 1.